A 238-amino-acid chain; its full sequence is MTRLSVNVNKIATLRNARGGNVPDVLRVALDCERFGAQGITVHPRPDERHIRRSDVYDLKKALTTEFNIEGNPDERFIRLIEEIRPEQVTMVPDAPDVLTSNAGWDVARNYDHLCRLVEQFHAWGIRTSIFIDTDLDNISWAAKTGTDRIELYTEPYAAAYHKDMAAAVQPYVKASAHAHSLGLGINAGHDLNLDNLRYFAERLPYLDEVSIGHALIADALYLGLEETIRQYRDQLAL.

Residues N7 and R18 each contribute to the 3-amino-2-oxopropyl phosphate site. Residue H43 is the Proton acceptor of the active site. R45 and H50 together coordinate 1-deoxy-D-xylulose 5-phosphate. E70 (proton acceptor) is an active-site residue. T100 is a 1-deoxy-D-xylulose 5-phosphate binding site. The Proton donor role is filled by H190. 3-amino-2-oxopropyl phosphate contacts are provided by residues D191 and G213–H214.

Belongs to the PNP synthase family. In terms of assembly, homooctamer; tetramer of dimers.

It localises to the cytoplasm. The catalysed reaction is 3-amino-2-oxopropyl phosphate + 1-deoxy-D-xylulose 5-phosphate = pyridoxine 5'-phosphate + phosphate + 2 H2O + H(+). The protein operates within cofactor biosynthesis; pyridoxine 5'-phosphate biosynthesis; pyridoxine 5'-phosphate from D-erythrose 4-phosphate: step 5/5. Catalyzes the complicated ring closure reaction between the two acyclic compounds 1-deoxy-D-xylulose-5-phosphate (DXP) and 3-amino-2-oxopropyl phosphate (1-amino-acetone-3-phosphate or AAP) to form pyridoxine 5'-phosphate (PNP) and inorganic phosphate. This is Pyridoxine 5'-phosphate synthase from Porphyromonas gingivalis (strain ATCC 33277 / DSM 20709 / CIP 103683 / JCM 12257 / NCTC 11834 / 2561).